Consider the following 848-residue polypeptide: Nuclear cap-binding protein subunit 1 (848 aa).

One can recognise an MIF4G domain in the interval 8 to 228; the sequence is LLRIGEKGPE…DLLDRIQSLA (221 aa). Positions 767-786 are disordered; that stretch reads EDDKPSAMDVDSENGNPKKS.

This sequence belongs to the NCBP1 family. Component of the nuclear cap-binding complex (CBC), a heterodimer composed of ABH1/CBP80 and CBP20 that interacts with m7GpppG-capped RNA. Expressed in all tissues analyzed, including roots, stems, leaves and flowers.

It is found in the nucleus. Its subcellular location is the cytoplasm. Its function is as follows. Component of the cap-binding complex (CBC), which binds cotranscriptionally to the 5'-cap of pre-mRNAs and is involved in various processes such as pre-mRNA splicing and RNA-mediated gene silencing (RNAi) by microRNAs (miRNAs). The CBC complex is involved in miRNA-mediated RNA interference and is required for primary miRNA processing. In the CBC complex, ABH1/CBP80 does not bind directly capped RNAs (m7GpppG-capped RNA) but is required to stabilize the movement of the N-terminal loop of CBP20 and lock the CBC into a high affinity cap-binding state with the cap structure. Involved in flowering regulation, possibly by regulating pre-mRNA splicing of FLC gene. Acts as a negative regulator of abscisic acid signaling in guard cells. The polypeptide is Nuclear cap-binding protein subunit 1 (ABH1) (Arabidopsis thaliana (Mouse-ear cress)).